The sequence spans 307 residues: Transcription initiation factor IIB 2 (307 aa).

The TFIIB-type zinc-finger motif lies at 7–38 (TPKRCPECNSEHLIRDYEHGELICADCGAVIE). Residues cysteine 11, cysteine 14, cysteine 30, and cysteine 33 each contribute to the Zn(2+) site. 2 repeat units span residues 124 to 207 (QLLN…AKEL) and 218 to 299 (SYIS…EISK).

This sequence belongs to the TFIIB family.

Stabilizes TBP binding to an archaeal box-A promoter. Also responsible for recruiting RNA polymerase II to the pre-initiation complex (DNA-TBP-TFIIB). The polypeptide is Transcription initiation factor IIB 2 (Thermoplasma acidophilum (strain ATCC 25905 / DSM 1728 / JCM 9062 / NBRC 15155 / AMRC-C165)).